Reading from the N-terminus, the 577-residue chain is Cell pattern formation-associated protein stuA (577 aa).

Positions 1–41 (MNQPQPYMDQHAPAPPPASNMTQYSNYGAPQPLQPATHGYG) are disordered. Positions 19-28 (SNMTQYSNYG) are enriched in polar residues. The HTH APSES-type domain maps to 111–217 (RVTATLWEDE…HNIGALLYHP (107 aa)). The H-T-H motif DNA-binding region spans 145 to 166 (GTKLLNVAGMTRGRRDGILKSE). Disordered stretches follow at residues 228-487 (ATMA…QLPS) and 518-577 (QYPA…AVRR). Composition is skewed to polar residues over residues 238-251 (SQEYMRTPQGTQAP) and 319-333 (AVNSASTPPSNSQGM). Residues 334–350 (PQYQTSQPPYTQSYSTP) are compositionally biased toward low complexity. A compositionally biased stretch (polar residues) spans 351-364 (GSYSQPQYTHQQPG). Positions 390-399 (AENDHPDHKV) are enriched in basic and acidic residues. Low complexity predominate over residues 465-479 (TPRTTNPYTGYNNTP). The segment at 526–552 (KRGREDDDQVDPYGRPSSALGEHKRQR) is nuclear localization domain.

Belongs to the EFG1/PHD1/stuA family.

The protein localises to the nucleus. In terms of biological role, transcription factor that regulates asexual reproduction. Binds the StuA-response elements (StRE) with the consensus sequence 5'-(A/T)CGCG(T/A)N(A/C)-3' at the promoters of target genes. This chain is Cell pattern formation-associated protein stuA, found in Dothistroma septosporum (strain NZE10 / CBS 128990) (Red band needle blight fungus).